The primary structure comprises 152 residues: Multiprotein-bridging factor 1 (152 aa).

2 stretches are compositionally biased toward polar residues: residues 1 to 11 (MSSDWDTNTVI) and 22 to 32 (PRQQVARTQGQ). The interval 1-32 (MSSDWDTNTVIGQRVRTGGSGPRQQVARTQGQ) is disordered. The HTH cro/C1-type domain occupies 86–140 (IAKGRGDKGMTQKDLATRINEKPTVINDYEAGRAIPNQQILAKMERALGVKLRGK). Positions 97–116 (QKDLATRINEKPTVINDYEA) form a DNA-binding region, H-T-H motif.

The protein belongs to the MBF1 family.

Its function is as follows. Transcriptional coactivator that stimulates GCN4-dependent transcriptional activity by bridging the DNA-binding region of GCN4 and TBP (SPT15), thereby recruiting TBP to GCN4-bound promoters. Involved in induction of the ribosome quality control (RQC) pathway; a pathway that degrades nascent peptide chains during problematic translation. Required to prevent stalled ribosomes from frameshifting. This chain is Multiprotein-bridging factor 1 (MBF1), found in Eremothecium gossypii (strain ATCC 10895 / CBS 109.51 / FGSC 9923 / NRRL Y-1056) (Yeast).